We begin with the raw amino-acid sequence, 381 residues long: MFNVVIVRYGEIGTKSRQTRRWFENILMNNIREALVSEGIDFKKVEAKHGRVLVRTNRAREATEVLTRVFGIVSLSPAMEVDAELEKINKTALKLFRKKKRELNLEKPKFRVTARRITKEFPLKSPEIQAKVGEYILENEESEVNLHEYDIEVGVELMEGKAYIFVDKIRAWGGLPIGTQGKVVALLSGGIDSPVAAFLMMKRGVEVIPVHIYMGEKTLEKVRKIWNQLKKYHYGGKAELIVVKPQNREEMLKKIKELGKEKYTCVLCKFMMVKHADRIAKEFGAKGIVMGDSLGQVASQTLENMYIVSQASDLPIYRPLIGLDKEEIVDIAKKIGTFELSTLPEDEIPFIPKHPVIRGSWEEFRKIYMAIFGEEPRKRDC.

The 109-residue stretch at Arg60–Lys168 folds into the THUMP domain. ATP is bound by residues Leu186 to Leu187, Lys269, Gly291, and Gln300.

It belongs to the ThiI family.

It is found in the cytoplasm. It catalyses the reaction [ThiI sulfur-carrier protein]-S-sulfanyl-L-cysteine + a uridine in tRNA + 2 reduced [2Fe-2S]-[ferredoxin] + ATP + H(+) = [ThiI sulfur-carrier protein]-L-cysteine + a 4-thiouridine in tRNA + 2 oxidized [2Fe-2S]-[ferredoxin] + AMP + diphosphate. The catalysed reaction is [ThiS sulfur-carrier protein]-C-terminal Gly-Gly-AMP + S-sulfanyl-L-cysteinyl-[cysteine desulfurase] + AH2 = [ThiS sulfur-carrier protein]-C-terminal-Gly-aminoethanethioate + L-cysteinyl-[cysteine desulfurase] + A + AMP + 2 H(+). It functions in the pathway cofactor biosynthesis; thiamine diphosphate biosynthesis. In terms of biological role, catalyzes the ATP-dependent transfer of a sulfur to tRNA to produce 4-thiouridine in position 8 of tRNAs, which functions as a near-UV photosensor. Also catalyzes the transfer of sulfur to the sulfur carrier protein ThiS, forming ThiS-thiocarboxylate. This is a step in the synthesis of thiazole, in the thiamine biosynthesis pathway. The sulfur is donated as persulfide by IscS. In Thermococcus kodakarensis (strain ATCC BAA-918 / JCM 12380 / KOD1) (Pyrococcus kodakaraensis (strain KOD1)), this protein is Probable tRNA sulfurtransferase.